The sequence spans 195 residues: Glycerol-3-phosphate acyltransferase 1 (195 aa).

The next 5 membrane-spanning stretches (helical) occupy residues 6–26 (VILT…GHFL), 52–72 (LGIA…FLVV), 74–94 (LGLK…AVAG), 117–137 (LAVY…LTFL), and 168–188 (FGLG…ISLF).

It belongs to the PlsY family. As to quaternary structure, probably interacts with PlsX.

It localises to the cell membrane. It carries out the reaction an acyl phosphate + sn-glycerol 3-phosphate = a 1-acyl-sn-glycero-3-phosphate + phosphate. Its pathway is lipid metabolism; phospholipid metabolism. Catalyzes the transfer of an acyl group from acyl-phosphate (acyl-PO(4)) to glycerol-3-phosphate (G3P) to form lysophosphatidic acid (LPA). This enzyme utilizes acyl-phosphate as fatty acyl donor, but not acyl-CoA or acyl-ACP. The sequence is that of Glycerol-3-phosphate acyltransferase 1 from Moorella thermoacetica (strain ATCC 39073 / JCM 9320).